The sequence spans 369 residues: tRNA 2-selenouridine synthase (369 aa).

The 124-residue stretch at 15 to 138 folds into the Rhodanese domain; that stretch reads MLSGHPMMDV…MRQYLIEVID (124 aa). The active-site S-selanylcysteine intermediate is Cys98.

It belongs to the SelU family. In terms of assembly, monomer.

The catalysed reaction is 5-methylaminomethyl-2-thiouridine(34) in tRNA + selenophosphate + (2E)-geranyl diphosphate + H2O + H(+) = 5-methylaminomethyl-2-selenouridine(34) in tRNA + (2E)-thiogeraniol + phosphate + diphosphate. The enzyme catalyses 5-methylaminomethyl-2-thiouridine(34) in tRNA + (2E)-geranyl diphosphate = 5-methylaminomethyl-S-(2E)-geranyl-thiouridine(34) in tRNA + diphosphate. It carries out the reaction 5-methylaminomethyl-S-(2E)-geranyl-thiouridine(34) in tRNA + selenophosphate + H(+) = 5-methylaminomethyl-2-(Se-phospho)selenouridine(34) in tRNA + (2E)-thiogeraniol. It catalyses the reaction 5-methylaminomethyl-2-(Se-phospho)selenouridine(34) in tRNA + H2O = 5-methylaminomethyl-2-selenouridine(34) in tRNA + phosphate. Functionally, involved in the post-transcriptional modification of the uridine at the wobble position (U34) of tRNA(Lys), tRNA(Glu) and tRNA(Gln). Catalyzes the conversion of 2-thiouridine (S2U-RNA) to 2-selenouridine (Se2U-RNA). Acts in a two-step process involving geranylation of 2-thiouridine (S2U) to S-geranyl-2-thiouridine (geS2U) and subsequent selenation of the latter derivative to 2-selenouridine (Se2U) in the tRNA chain. This Shewanella sediminis (strain HAW-EB3) protein is tRNA 2-selenouridine synthase.